A 220-amino-acid chain; its full sequence is Sec-independent protein translocase protein TatB (220 aa).

A helical membrane pass occupies residues 1-21 (MFDIGFSELLLVLVIGLVVLG). The tract at residues 190–220 (VTKQQIDTIDSHGTDLSSAGPSRIHQPGGDQ) is disordered.

It belongs to the TatB family. In terms of assembly, the Tat system comprises two distinct complexes: a TatABC complex, containing multiple copies of TatA, TatB and TatC subunits, and a separate TatA complex, containing only TatA subunits. Substrates initially bind to the TatABC complex, which probably triggers association of the separate TatA complex to form the active translocon.

The protein localises to the cell inner membrane. In terms of biological role, part of the twin-arginine translocation (Tat) system that transports large folded proteins containing a characteristic twin-arginine motif in their signal peptide across membranes. Together with TatC, TatB is part of a receptor directly interacting with Tat signal peptides. TatB may form an oligomeric binding site that transiently accommodates folded Tat precursor proteins before their translocation. The polypeptide is Sec-independent protein translocase protein TatB (Yersinia pseudotuberculosis serotype I (strain IP32953)).